Consider the following 319-residue polypeptide: Transaldolase (319 aa).

Catalysis depends on Lys131, which acts as the Schiff-base intermediate with substrate.

This sequence belongs to the transaldolase family. Type 1 subfamily. In terms of assembly, homodimer.

The protein resides in the cytoplasm. It catalyses the reaction D-sedoheptulose 7-phosphate + D-glyceraldehyde 3-phosphate = D-erythrose 4-phosphate + beta-D-fructose 6-phosphate. It functions in the pathway carbohydrate degradation; pentose phosphate pathway; D-glyceraldehyde 3-phosphate and beta-D-fructose 6-phosphate from D-ribose 5-phosphate and D-xylulose 5-phosphate (non-oxidative stage): step 2/3. Its function is as follows. Transaldolase is important for the balance of metabolites in the pentose-phosphate pathway. The sequence is that of Transaldolase from Wigglesworthia glossinidia brevipalpis.